A 240-amino-acid chain; its full sequence is UDP-2,3-diacylglucosamine hydrolase (240 aa).

Asp-8, His-10, Asp-41, Asn-79, and His-114 together coordinate Mn(2+). Asn-79–Arg-80 lines the substrate pocket. Residues Asp-122, Ser-160, Asn-164, Lys-167, and His-195 each contribute to the substrate site. Mn(2+)-binding residues include His-195 and His-197.

It belongs to the LpxH family. The cofactor is Mn(2+).

The protein resides in the cell inner membrane. It carries out the reaction UDP-2-N,3-O-bis[(3R)-3-hydroxytetradecanoyl]-alpha-D-glucosamine + H2O = 2-N,3-O-bis[(3R)-3-hydroxytetradecanoyl]-alpha-D-glucosaminyl 1-phosphate + UMP + 2 H(+). It functions in the pathway glycolipid biosynthesis; lipid IV(A) biosynthesis; lipid IV(A) from (3R)-3-hydroxytetradecanoyl-[acyl-carrier-protein] and UDP-N-acetyl-alpha-D-glucosamine: step 4/6. Hydrolyzes the pyrophosphate bond of UDP-2,3-diacylglucosamine to yield 2,3-diacylglucosamine 1-phosphate (lipid X) and UMP by catalyzing the attack of water at the alpha-P atom. Involved in the biosynthesis of lipid A, a phosphorylated glycolipid that anchors the lipopolysaccharide to the outer membrane of the cell. This is UDP-2,3-diacylglucosamine hydrolase from Salmonella schwarzengrund (strain CVM19633).